A 633-amino-acid polypeptide reads, in one-letter code: Probable potassium transport system protein Kup 2 (633 aa).

The next 12 helical transmembrane spans lie at 18 to 38 (FLAM…TSPL), 61 to 81 (LISL…VLFL), 109 to 129 (LMFM…MITP), 145 to 165 (PAFH…LFAV), 173 to 193 (VSIF…AAGV), 211 to 231 (AVTF…AVFL), 255 to 275 (WFAV…ALVL), 287 to 307 (LMFP…ATII), 345 to 365 (IYLP…MFMF), 371 to 391 (LATA…VLAF), 405 to 425 (ATAV…ANLF), and 427 to 447 (IHDG…TMWT).

Belongs to the HAK/KUP transporter (TC 2.A.72) family.

It localises to the cell inner membrane. It carries out the reaction K(+)(in) + H(+)(in) = K(+)(out) + H(+)(out). Transport of potassium into the cell. Likely operates as a K(+):H(+) symporter. The polypeptide is Probable potassium transport system protein Kup 2 (Sinorhizobium medicae (strain WSM419) (Ensifer medicae)).